A 2556-amino-acid polypeptide reads, in one-letter code: Non-reducing polyketide synthase tazA (2556 aa).

The N-terminal acylcarrier protein transacylase domain (SAT) stretch occupies residues 16 to 270 (LFGPQALSFT…QAIGLRGRFH (255 aa)). Catalysis depends on Cys-143, which acts as the Nucleophile; for transacylase activity. The active-site Proton donor/acceptor; for transacylase activity is His-270. The region spanning 397-769 (EDEIAVIGMA…GSNASMIVTQ (373 aa)) is the Ketosynthase family 3 (KS3) domain. The segment at 876 to 1209 (CFGGQISRFV…WAHHCTQAPA (334 aa)) is malonyl-CoA:ACP transacylase (MAT) domain. Residues 1254–1383 (YTFVGYQDEG…GQIIFQSAAE (130 aa)) form an N-terminal hotdog fold region. A PKS/mFAS DH domain is found at 1254–1560 (YTFVGYQDEG…YSRLPKSTMS (307 aa)). A product template (PT) domain region spans residues 1257 to 1564 (VGYQDEGKRQ…PKSTMSKMLT (308 aa)). The active-site Proton acceptor; for dehydratase activity is His-1285. Residues 1408–1560 (DPDDVLQGRN…YSRLPKSTMS (153 aa)) are C-terminal hotdog fold. Residue Asp-1465 is the Proton donor; for dehydratase activity of the active site. The disordered stretch occupies residues 1567-1621 (TAPSERRAQVDSPSMPASINAPPSASEQAPVEPAPQTKESAPIAEPGAGGQSNSK). The span at 1577 to 1593 (DSPSMPASINAPPSASE) shows a compositional bias: polar residues. The Carrier domain maps to 1620-1694 (SKVPGIVVEV…DVVQCVHKTL (75 aa)). O-(pantetheine 4'-phosphoryl)serine is present on Ser-1654. The interval 1700–1731 (SAAQESEGNLTPASSGTQSPRSDPVSDTSLSD) is disordered. Over residues 1702-1731 (AQESEGNLTPASSGTQSPRSDPVSDTSLSD) the composition is skewed to polar residues. Residues 1830-2107 (LEHEGRLIDI…DWTDGHLAEN (278 aa)) form a methyltransferase domain region. An NADPH-binding (R) domain region spans residues 2180–2424 (VTGATGSLGA…WTPVDVVAST (245 aa)).

The cofactor is pantetheine 4'-phosphate.

Its pathway is secondary metabolite biosynthesis. Functionally, non-reducing polyketide synthase; part of the gene cluster that mediates the biosynthesis of azaterrilone A and other azaphilones, a class of fungal metabolites characterized by a highly oxygenated pyrano-quinone bicyclic core and exhibiting a broad range of bioactivities. The first step of the pathway begins with tazA that assembles one acetyl-CoA starter unit, five malonyl-CoA units, and catalyzes a series of Claisen condensations, methylation, PT-mediated cyclization, and finally releases the first hexaketide precursor through the R-domain. The tazA product then undergoes reduction on its terminal ketone and the following pyran-ring formation by yet undetermined enzyme(s). Dehydration and enoyl reduction, possibly involving the trans-enoyl reductase tazE leads to the next intermediate. TazD is predicted as an acetyltransferase and might catalyze the acetylation steps leading to the synthesis of azaterrilone A. Azaterrilone A is not the final product of the taz pathway and both the highly reducing polyketide synthase tazB and the dual enzyme tazHJ catalyze late steps of the pathway, leading to the production of the 2 final stereoisomers that contain additional polyketide modification whose structures have still to be determined. In Aspergillus terreus (strain NIH 2624 / FGSC A1156), this protein is Non-reducing polyketide synthase tazA.